A 70-amino-acid polypeptide reads, in one-letter code: Probable rubredoxin HupI (70 aa).

The region spanning 15–66 (DDRMECGICWHVYDPAEGDPVWQIPPGTPFSNLTEDWRCPNCDALQSKFMRL) is the Rubredoxin-like domain. Positions 20, 23, 53, and 56 each coordinate Fe cation.

It belongs to the rubredoxin family. Requires Fe(3+) as cofactor.

In terms of biological role, could be an electron transport intermediate in hydrogen oxidation. The chain is Probable rubredoxin HupI (hupI) from Rhizobium leguminosarum bv. viciae.